We begin with the raw amino-acid sequence, 310 residues long: Calcium homeostasis modulator protein 5 (310 aa).

4 consecutive transmembrane segments (helical) span residues 17–37 (TIGY…FSMV), 49–69 (FPYG…VGFF), 101–121 (LIKV…VALL), and 181–201 (QILG…GTCY).

The protein belongs to the CALHM family.

Its subcellular location is the membrane. Its function is as follows. Pore-forming subunit of a voltage-gated ion channel. This chain is Calcium homeostasis modulator protein 5 (calhm5.1), found in Danio rerio (Zebrafish).